A 349-amino-acid polypeptide reads, in one-letter code: tRNA pseudouridine synthase D (349 aa).

Phe27 lines the substrate pocket. Catalysis depends on Asp80, which acts as the Nucleophile. Asn129 contributes to the substrate binding site. The TRUD domain maps to 155 to 303 (GVPNYFGAQR…VEAARRAMLL (149 aa)). Phe329 contacts substrate.

Belongs to the pseudouridine synthase TruD family.

It catalyses the reaction uridine(13) in tRNA = pseudouridine(13) in tRNA. Its function is as follows. Responsible for synthesis of pseudouridine from uracil-13 in transfer RNAs. This Shigella flexneri protein is tRNA pseudouridine synthase D.